We begin with the raw amino-acid sequence, 155 residues long: MSRRSTNEGRLTRPNPVYRNRLVNMLVNIILKNGKKSVAYRILHEAMKTIQQKTKKNPLAVVRQAIRRVTPNVAVKARRRGGSTYQVPVEIKPDQGKALAVRWILAAARKRPGRSMAFKLSYELMDAARQTGNAIRKREETHRMAEANKAFAHYR.

It belongs to the universal ribosomal protein uS7 family. In terms of assembly, part of the 30S ribosomal subunit.

It localises to the plastid. The protein resides in the chloroplast. Its function is as follows. One of the primary rRNA binding proteins, it binds directly to 16S rRNA where it nucleates assembly of the head domain of the 30S subunit. The chain is Small ribosomal subunit protein uS7c (rps7) from Staurastrum punctulatum (Green alga).